We begin with the raw amino-acid sequence, 278 residues long: Sulfur carrier protein FdhD (278 aa).

Cysteine 117 acts as the Cysteine persulfide intermediate in catalysis.

This sequence belongs to the FdhD family.

The protein resides in the cytoplasm. Required for formate dehydrogenase (FDH) activity. Acts as a sulfur carrier protein that transfers sulfur from IscS to the molybdenum cofactor prior to its insertion into FDH. This is Sulfur carrier protein FdhD from Variovorax paradoxus (strain S110).